Reading from the N-terminus, the 252-residue chain is tRNA pseudouridine synthase A (252 aa).

Asp54 (nucleophile) is an active-site residue. Tyr112 provides a ligand contact to substrate.

Belongs to the tRNA pseudouridine synthase TruA family. In terms of assembly, homodimer.

The enzyme catalyses uridine(38/39/40) in tRNA = pseudouridine(38/39/40) in tRNA. In terms of biological role, formation of pseudouridine at positions 38, 39 and 40 in the anticodon stem and loop of transfer RNAs. The protein is tRNA pseudouridine synthase A of Oenococcus oeni (strain ATCC BAA-331 / PSU-1).